The primary structure comprises 88 residues: Small ribosomal subunit protein bS20 (88 aa).

It belongs to the bacterial ribosomal protein bS20 family.

Binds directly to 16S ribosomal RNA. In Methylocella silvestris (strain DSM 15510 / CIP 108128 / LMG 27833 / NCIMB 13906 / BL2), this protein is Small ribosomal subunit protein bS20.